We begin with the raw amino-acid sequence, 98 residues long: NADH-ubiquinone oxidoreductase chain 4L (98 aa).

The next 3 helical transmembrane spans lie at 2-22 (TQAS…TLIF), 29-49 (TLLC…MTAL), and 61-81 (IVML…LAMI).

It belongs to the complex I subunit 4L family. Core subunit of respiratory chain NADH dehydrogenase (Complex I) which is composed of 45 different subunits.

Its subcellular location is the mitochondrion inner membrane. It carries out the reaction a ubiquinone + NADH + 5 H(+)(in) = a ubiquinol + NAD(+) + 4 H(+)(out). In terms of biological role, core subunit of the mitochondrial membrane respiratory chain NADH dehydrogenase (Complex I) which catalyzes electron transfer from NADH through the respiratory chain, using ubiquinone as an electron acceptor. Part of the enzyme membrane arm which is embedded in the lipid bilayer and involved in proton translocation. This chain is NADH-ubiquinone oxidoreductase chain 4L (MT-ND4L), found in Calomys musculinus (Drylands vesper mouse).